The sequence spans 427 residues: Flotillin-1 (427 aa).

A phosphoserine mark is found at Ser-19, Ser-163, and Ser-385. Phosphothreonine is present on Thr-387.

It belongs to the band 7/mec-2 family. Flotillin subfamily. In terms of assembly, heterooligomeric complex of flotillin-1 and flotillin-2 and caveolin-1 and caveolin-2. Interacts with ECPAS.

The protein localises to the cell membrane. Its subcellular location is the endosome. It is found in the membrane. It localises to the caveola. The protein resides in the melanosome. The protein localises to the membrane raft. In terms of biological role, may act as a scaffolding protein within caveolar membranes, functionally participating in formation of caveolae or caveolae-like vesicles. The protein is Flotillin-1 (FLOT1) of Macaca mulatta (Rhesus macaque).